Consider the following 514-residue polypeptide: Extracellular exo-inulinase (514 aa).

The N-terminal stretch at 1–18 (MRAFLALIFLTFVMNVES) is a signal peptide. Substrate is bound by residues 33 to 34 (ND) and Gln-52. Asp-34 (nucleophile) is an active-site residue. The N-linked (GlcNAc...) asparagine glycan is linked to Asn-56. 2 residues coordinate substrate: Trp-60 and Ser-95. N-linked (GlcNAc...) asparagine glycans are attached at residues Asn-104 and Asn-110. 162–163 (RD) contributes to the substrate binding site. 2 N-linked (GlcNAc...) asparagine glycosylation sites follow: Asn-197 and Asn-203. Residues Glu-214 and Trp-300 each coordinate substrate. Catalysis depends on Glu-214, which acts as the Proton donor/acceptor. N-linked (GlcNAc...) asparagine glycans are attached at residues Asn-357, Asn-371, Asn-389, and Asn-422.

The protein belongs to the glycosyl hydrolase 32 family.

The protein resides in the secreted. It catalyses the reaction Hydrolysis of terminal, non-reducing (2-&gt;1)- and (2-&gt;6)-linked beta-D-fructofuranose residues in fructans.. Exo-inulinase involved in utilization of the plant storage polymer inulin, consisting of fructooligosaccharides with a degree of polymerization (DP) value from 2 to 60. Splits off terminal fructose units successively from the non-reducing end of the inulin molecule. This chain is Extracellular exo-inulinase, found in Meyerozyma guilliermondii (strain ATCC 6260 / CBS 566 / DSM 6381 / JCM 1539 / NBRC 10279 / NRRL Y-324) (Yeast).